The chain runs to 89 residues: Large ribosomal subunit protein eL43 (89 aa).

Zn(2+) is bound by residues cysteine 38, cysteine 41, cysteine 56, and cysteine 59. A C4-type zinc finger spans residues 38–59 (CPSCDRPGVKRESRGIWKCRKC).

Belongs to the eukaryotic ribosomal protein eL43 family. Putative zinc-binding subfamily. As to quaternary structure, part of the 50S ribosomal subunit. Zn(2+) serves as cofactor.

In terms of biological role, binds to the 23S rRNA. This is Large ribosomal subunit protein eL43 from Methanothermobacter thermautotrophicus (strain ATCC 29096 / DSM 1053 / JCM 10044 / NBRC 100330 / Delta H) (Methanobacterium thermoautotrophicum).